A 121-amino-acid polypeptide reads, in one-letter code: Mu-hexatoxin-Mg1a (121 aa).

Residues 1 to 20 form the signal peptide; the sequence is MMTLSPFLLLLIAAVVIGNA. Positions 21–80 are excised as a propeptide; that stretch reads SEGEVKNEFEERLKDEFKDPSRSEVAEVILLRELEVLEETLFGKEMTSDTEENRNSREKR. 3 disulfide bridges follow: C81–C95, C88–C102, and C94–C116. Lysine amide is present on K120.

This sequence belongs to the neurotoxin 14 (magi-1) family. 09 (magi-1) subfamily. As to expression, expressed by the venom gland.

Its subcellular location is the secreted. Functionally, insecticidal neurotoxin. Shows competition for site 3 of insect voltage-gated sodium channels (Nav). Induces flaccid paralysis when injected into lepidopteran larvae. Is not toxic to mice when injected intracranially at 20 pmol/g. The chain is Mu-hexatoxin-Mg1a from Macrothele gigas (Japanese funnel web spider).